A 141-amino-acid polypeptide reads, in one-letter code: Hemoglobin subunit alpha-2 (141 aa).

The residue at position 1 (Ser-1) is an N-acetylserine. Residues 1-141 (SLSTKDKETV…LARALSEKYR (141 aa)) form the Globin domain. Residue His-59 coordinates O2. Heme b is bound at residue His-88.

Belongs to the globin family. Hb2 is a heterotetramer of two alpha-2 chains and two beta chains. In terms of tissue distribution, red blood cells.

Functionally, involved in oxygen transport from gills to the various peripheral tissues. This Notothenia angustata (Rockcod) protein is Hemoglobin subunit alpha-2 (hba2).